The sequence spans 600 residues: MTTPESSATSSVKIYFRLLSYVRPYVGIFLLSILGFVIFASTQPMLAGILKYFVDGLSNPEAVLFPNVPYLRELQLLQAVPLLIVLIAAWQGLGSFLGNYFLAKVSLGLVHDLRVELFNKLLVLPNRYFDTTNSGHLISRITFNVTMVTGAATDAIKVVIREGLTVVFLFIYLLMMNWKLTLVMLAILPLIAVMVSSASKKFRKQSKKIQVAMGDVTHVASETIQGYRVVRSFGGEAYEQNRFAEASDSNTRKQLRMTKTGAIYTPMLQLVIYSAMAVLMFLVLFLRGDATAGDLVAYITAAGLLPKPIRQLSEVSSTIQKGVAGAESIFEQLDVEEEVDTGTIELDRVSGHLEVKNLSFFYPQTERQVLNDISFSAAPGQMIALVGRSGSGKSTLANLIPRFYGHEMGNILLDGVEINDYRLRNLRKHIAQVNQNVTLFNDSIANNIAYGDLAGAPRADIEAAAADAYAKEFIDQLPQGFDTQVGENGVLLSGGQRQRLAIARALLKNAPLLILDEATSALDTESERHIQAALDHVMKGRTTLVIAHRLSTIEKADMILVMDAGKIVERGTHTELLAQNGYYARLHAMGLDEPAPAGAV.

A run of 4 helical transmembrane segments spans residues 26 to 46 (VGIF…QPML), 82 to 102 (LLIV…NYFL), 167 to 187 (VFLF…MLAI), and 266 to 286 (PMLQ…VLFL). The 292-residue stretch at 30–321 (LLSILGFVIF…LSEVSSTIQK (292 aa)) folds into the ABC transmembrane type-1 domain. Positions 353–589 (LEVKNLSFFY…NGYYARLHAM (237 aa)) constitute an ABC transporter domain. 387–394 (GRSGSGKS) provides a ligand contact to ATP.

This sequence belongs to the ABC transporter superfamily. Lipid exporter (TC 3.A.1.106) family. In terms of assembly, homodimer.

It is found in the cell inner membrane. It carries out the reaction ATP + H2O + lipid A-core oligosaccharideSide 1 = ADP + phosphate + lipid A-core oligosaccharideSide 2.. Involved in lipopolysaccharide (LPS) biosynthesis. Translocates lipid A-core from the inner to the outer leaflet of the inner membrane. Transmembrane domains (TMD) form a pore in the inner membrane and the ATP-binding domain (NBD) is responsible for energy generation. The polypeptide is ATP-dependent lipid A-core flippase (Pseudomonas syringae pv. tomato (strain ATCC BAA-871 / DC3000)).